Consider the following 712-residue polypeptide: Elongation factor G (712 aa).

The region spanning Thr8 to Thr290 is the tr-type G domain. Residues Ala17–Thr24, Asp88–His92, and Asn142–Asp145 contribute to the GTP site.

The protein belongs to the TRAFAC class translation factor GTPase superfamily. Classic translation factor GTPase family. EF-G/EF-2 subfamily.

Its subcellular location is the cytoplasm. In terms of biological role, catalyzes the GTP-dependent ribosomal translocation step during translation elongation. During this step, the ribosome changes from the pre-translocational (PRE) to the post-translocational (POST) state as the newly formed A-site-bound peptidyl-tRNA and P-site-bound deacylated tRNA move to the P and E sites, respectively. Catalyzes the coordinated movement of the two tRNA molecules, the mRNA and conformational changes in the ribosome. This Acinetobacter baumannii (strain AB0057) protein is Elongation factor G.